The following is a 271-amino-acid chain: MASENMTPQDYIGHHLNNLQLDLRTFSLVDPQNPPATFWTINIDSMFFSVVLGLLFLVLFRSVAKKATSGVPGKFQTAIELVIGFVNGSVKDMYHGKSKLIAPLALTIFVWVFLMNLMDLLPIDLLPYIAEHVLGLPALRVVPSADVNVTLSMALGVFILILFYSIKMKGIGGFTKELTLQPFNHWAFIPVNLILEGVSLLSKPVSLGLRLFGNMYAGELIFILIAGLLPWWSQWILNVPWAIFHILIITLQAFIFMVLTIVYLSMASEEH.

The next 5 helical transmembrane spans lie at 40–60 (TINI…LVLF), 100–120 (LIAP…LMDL), 146–166 (DVNV…FYSI), 220–240 (LIFI…LNVP), and 242–262 (AIFH…LTIV).

Belongs to the ATPase A chain family. As to quaternary structure, F-type ATPases have 2 components, CF(1) - the catalytic core - and CF(0) - the membrane proton channel. CF(1) has five subunits: alpha(3), beta(3), gamma(1), delta(1), epsilon(1). CF(0) has three main subunits: a(1), b(2) and c(9-12). The alpha and beta chains form an alternating ring which encloses part of the gamma chain. CF(1) is attached to CF(0) by a central stalk formed by the gamma and epsilon chains, while a peripheral stalk is formed by the delta and b chains.

The protein localises to the cell inner membrane. Its function is as follows. Key component of the proton channel; it plays a direct role in the translocation of protons across the membrane. This Escherichia coli O8 (strain IAI1) protein is ATP synthase subunit a.